Reading from the N-terminus, the 634-residue chain is Protection of telomeres protein 1 (634 aa).

The protein belongs to the telombin family. In terms of assembly, homodimer or homooligomer. Component of the shelterin complex (telosome) composed of TERF1, TERF2, TINF2, TERF2IP, ACD and POT1. Binds single-stranded telomeric DNA as a monomer. Associated component of the telomerase holoenzyme complex. Found in a complex with TERF1, TINF2 and TNKS1. Interacts with TNKS1. Forms heterodimers with ACD. Identified in a complex with ACD and single-stranded telomeric DNA.

It localises to the nucleus. It is found in the chromosome. Its subcellular location is the telomere. In terms of biological role, component of the telomerase ribonucleoprotein (RNP) complex that is essential for the replication of chromosome termini. Is a component of the double-stranded telomeric DNA-binding TRF1 complex which is involved in the regulation of telomere length by cis-inhibition of telomerase. Also acts as a single-stranded telomeric DNA-binding protein and thus may act as a downstream effector of the TRF1 complex and may transduce information about telomere maintenance and/or length to the telomere terminus. Component of the shelterin complex (telosome) that is involved in the regulation of telomere length and protection. Shelterin associates with arrays of double-stranded TTAGGG repeats added by telomerase and protects chromosome ends; without its protective activity, telomeres are no longer hidden from the DNA damage surveillance and chromosome ends are inappropriately processed by DNA repair pathways. Binds to two or more telomeric single-stranded 5'-TTAGGG-3' repeats (G-strand) and with high specificity to a minimal telomeric single-stranded 5'-TAGGGTTAG-3' sequence. Binds telomeric single-stranded sequences internally or at proximity of a 3'-end. Its activity is TERT dependent but it does not increase TERT activity by itself. In contrast, the ACD-POT1 heterodimer enhances telomere elongation by increasing telomerase processivity. The polypeptide is Protection of telomeres protein 1 (POT1) (Macaca fascicularis (Crab-eating macaque)).